Consider the following 553-residue polypeptide: Probable malate:quinone oxidoreductase (553 aa).

Residues 534–543 show a composition bias toward low complexity; it reads QLKPQVQPQP. A disordered region spans residues 534–553; sequence QLKPQVQPQPAHKAVADIAL.

Belongs to the MQO family. The cofactor is FAD.

The enzyme catalyses (S)-malate + a quinone = a quinol + oxaloacetate. The protein operates within carbohydrate metabolism; tricarboxylic acid cycle; oxaloacetate from (S)-malate (quinone route): step 1/1. In Citrobacter koseri (strain ATCC BAA-895 / CDC 4225-83 / SGSC4696), this protein is Probable malate:quinone oxidoreductase.